The primary structure comprises 531 residues: MSGRGAGGFPLPPLSPGGGAVAAALGAPPPPAGPGMLPGPALRGPGPAGGVGGPGAAAFRPMGPAGPAAQYQRPGMSPGNRMPMAGLQVGPPAGSPFGAAAPLRPGMPPTMMDPFRKRLLVPQAQPPMPAQRRGLKRRKMADKVLPQRIRELVPESQAYMDLLAFERKLDQTIARKRMEIQEAIKKPLTQKRKLRIYISNTFSPSKAEGDSAGTAGTPGGTPAGDKVASWELRVEGKLLDDPSKQKRKFSSFFKSLVIELDKELYGPDNHLVEWHRMPTTQETDGFQVKRPGDLNVKCTLLLMLDHQPPQYKLDPRLARLLGVHTQTRAAIMQALWLYIKHNQLQDGHEREYINCNRYFRQIFSCGRLRFSEIPMKLAGLLQHPDPIVINHVISVDPNDQKKTACYDIDVEVDDPLKAQMSNFLASTTNQQEIASLDVKIHETIESINQLKTQRDFMLSFSTDPQDFIQEWLRSQRRDLKIITDVIGNPEEERRAAFYHQPWAQEAVGRHIFAKVQQRRQELEQVLGIRLT.

Asymmetric dimethylarginine is present on residues Arg81 and Arg104. Ser203 bears the Phosphoserine mark. The interval 205–226 (SKAEGDSAGTAGTPGGTPAGDK) is disordered. Thr217 carries the post-translational modification Phosphothreonine. Lys226 participates in a covalent cross-link: Glycyl lysine isopeptide (Lys-Gly) (interchain with G-Cter in SUMO2). The 78-residue stretch at 306 to 383 (HQPPQYKLDP…PMKLAGLLQH (78 aa)) folds into the SWIB/MDM2 domain.

The protein belongs to the SMARCD family. In terms of assembly, component of the multiprotein chromatin-remodeling complexes SWI/SNF: SWI/SNF-A (BAF), SWI/SNF-B (PBAF) and related complexes. The canonical complex contains a catalytic subunit (either SMARCA4/BRG1/BAF190A or SMARCA2/BRM/BAF190B), and at least SMARCE1, ACTL6A/BAF53, SMARCC1/BAF155, SMARCC2/BAF170, and SMARCB1/SNF5/BAF47. Other subunits specific to each of the complexes may also be present permitting several possible combinations developmentally and tissue specific. Component of the BAF complex, which includes at least actin (ACTB), ARID1A/BAF250A, ARID1B/BAF250B, SMARCA2/BRM, SMARCA4/BRG1, ACTL6A/BAF53, ACTL6B/BAF53B, SMARCE1/BAF57, SMARCC1/BAF155, SMARCC2/BAF170, SMARCB1/SNF5/INI1, and one or more SMARCD1/BAF60A, SMARCD2/BAF60B, or SMARCD3/BAF60C. In muscle cells, the BAF complex also contains DPF3. Component of the SWI/SNF-B (PBAF) chromatin remodeling complex, at least composed of SMARCA4/BRG1, SMARCB1/BAF47/SNF5, ACTL6A/BAF53A or ACTL6B/BAF53B, SMARCE1/BAF57, SMARCD1/BAF60A, SMARCD2/BAF60B, perhaps SMARCD3/BAF60C, SMARCC1/BAF155, SMARCC2/BAF170, PBRM1/BAF180, ARID2/BAF200 and actin (ACTB). Interacts with UNKL. Interacts with CEBPE. Ubiquitinated through a signaling process involving RAC1 and the RING finger protein UNKL. As to expression, isoform 2 is expressed in the pancreas.

The protein resides in the nucleus. Involved in transcriptional activation and repression of select genes by chromatin remodeling (alteration of DNA-nucleosome topology). Component of SWI/SNF chromatin remodeling complexes that carry out key enzymatic activities, changing chromatin structure by altering DNA-histone contacts within a nucleosome in an ATP-dependent manner. Critical regulator of myeloid differentiation, controlling granulocytopoiesis and the expression of genes involved in neutrophil granule formation. The sequence is that of SWI/SNF-related matrix-associated actin-dependent regulator of chromatin subfamily D member 2 (SMARCD2) from Homo sapiens (Human).